The following is a 196-amino-acid chain: Large ribosomal subunit protein eL15 (196 aa).

Basic residues-rich tracts occupy residues 160-172 and 186-196; these read ATRG…RKGR and PSIRAHKSRGK. Residues 160–196 are disordered; that stretch reads ATRGKTSAGRKGRGMSTRGKGTEKTRPSIRAHKSRGK.

It belongs to the eukaryotic ribosomal protein eL15 family.

The protein is Large ribosomal subunit protein eL15 (rpl15e) of Methanosarcina mazei (strain ATCC BAA-159 / DSM 3647 / Goe1 / Go1 / JCM 11833 / OCM 88) (Methanosarcina frisia).